The following is a 321-amino-acid chain: Phosphopantothenate--cysteine ligase 1 (321 aa).

It belongs to the PPC synthetase family. In terms of assembly, homodimer.

It catalyses the reaction (R)-4'-phosphopantothenate + L-cysteine + CTP = N-[(R)-4-phosphopantothenoyl]-L-cysteine + CMP + diphosphate + H(+). It functions in the pathway cofactor biosynthesis; coenzyme A biosynthesis; CoA from (R)-pantothenate: step 2/5. Catalyzes the first step in the biosynthesis of coenzyme A from vitamin B5, where cysteine is conjugated to 4'-phosphopantothenate to form 4-phosphopantothenoylcysteine. The protein is Phosphopantothenate--cysteine ligase 1 of Oryza sativa subsp. japonica (Rice).